We begin with the raw amino-acid sequence, 350 residues long: Probable dual-specificity RNA methyltransferase RlmN (350 aa).

The Proton acceptor role is filled by Glu98. Residues 104–334 (HTYGNSVCVS…VTVRRELGGD (231 aa)) form the Radical SAM core domain. An intrachain disulfide couples Cys111 to Cys339. Residues Cys118, Cys122, and Cys125 each contribute to the [4Fe-4S] cluster site. Residues 165 to 166 (GE), Ser197, 220 to 222 (SLH), and Asn296 contribute to the S-adenosyl-L-methionine site. Cys339 acts as the S-methylcysteine intermediate in catalysis.

Belongs to the radical SAM superfamily. RlmN family. It depends on [4Fe-4S] cluster as a cofactor.

Its subcellular location is the cytoplasm. The catalysed reaction is adenosine(2503) in 23S rRNA + 2 reduced [2Fe-2S]-[ferredoxin] + 2 S-adenosyl-L-methionine = 2-methyladenosine(2503) in 23S rRNA + 5'-deoxyadenosine + L-methionine + 2 oxidized [2Fe-2S]-[ferredoxin] + S-adenosyl-L-homocysteine. It catalyses the reaction adenosine(37) in tRNA + 2 reduced [2Fe-2S]-[ferredoxin] + 2 S-adenosyl-L-methionine = 2-methyladenosine(37) in tRNA + 5'-deoxyadenosine + L-methionine + 2 oxidized [2Fe-2S]-[ferredoxin] + S-adenosyl-L-homocysteine. Functionally, specifically methylates position 2 of adenine 2503 in 23S rRNA and position 2 of adenine 37 in tRNAs. This is Probable dual-specificity RNA methyltransferase RlmN from Desulforamulus reducens (strain ATCC BAA-1160 / DSM 100696 / MI-1) (Desulfotomaculum reducens).